The chain runs to 291 residues: Small ribosomal subunit biogenesis GTPase RsgA 2 (291 aa).

The CP-type G domain maps to 63-221; the sequence is ENALVRPPVA…VADTPGFSSI (159 aa). GTP is bound by residues 112–115 and 164–172; these read SKMD and GQSGVGKST. Residues Cys245, Cys250, His252, and Cys258 each coordinate Zn(2+).

The protein belongs to the TRAFAC class YlqF/YawG GTPase family. RsgA subfamily. Monomer. Associates with 30S ribosomal subunit, binds 16S rRNA. Zn(2+) serves as cofactor.

The protein localises to the cytoplasm. One of several proteins that assist in the late maturation steps of the functional core of the 30S ribosomal subunit. Helps release RbfA from mature subunits. May play a role in the assembly of ribosomal proteins into the subunit. Circularly permuted GTPase that catalyzes slow GTP hydrolysis, GTPase activity is stimulated by the 30S ribosomal subunit. This is Small ribosomal subunit biogenesis GTPase RsgA 2 from Listeria innocua serovar 6a (strain ATCC BAA-680 / CLIP 11262).